The following is a 115-amino-acid chain: Large ribosomal subunit protein bL19 (115 aa).

It belongs to the bacterial ribosomal protein bL19 family.

Functionally, this protein is located at the 30S-50S ribosomal subunit interface and may play a role in the structure and function of the aminoacyl-tRNA binding site. This Streptococcus sanguinis (strain SK36) protein is Large ribosomal subunit protein bL19.